We begin with the raw amino-acid sequence, 295 residues long: Hepatic leukemia factor (295 aa).

Residues 34 to 52 (LHPEDAFSKDRDKGKKLDD) show a composition bias toward basic and acidic residues. Disordered regions lie at residues 34-69 (LHPE…GPTL) and 93-160 (SENG…NRNT). One can recognise a bZIP domain in the interval 225-288 (DDKYWARRRK…GKCKNILAKY (64 aa)). A basic motif region spans residues 227–247 (KYWARRRKNNMAAKRSRDARR). The segment at 248–255 (LKENQIAI) is leucine-zipper.

This sequence belongs to the bZIP family. PAR subfamily. Binds DNA specifically as homodimer or heterodimer with other PAR factors. As to expression, isoform HLF43 is abundant in brain, liver and kidney. Isoform HLF36 is expressed only in the liver. Both isoforms accumulate in the liver with different circadian amplitudes. Isoform HLF36 reaches peak expression levels between 8 and 12 p.m. Isoform HLF43 displays a more pronounced fluctuation through the day.

It localises to the nucleus. The chain is Hepatic leukemia factor (Hlf) from Rattus norvegicus (Rat).